The sequence spans 384 residues: 1-deoxy-D-xylulose 5-phosphate reductoisomerase (384 aa).

NADPH contacts are provided by threonine 10, glycine 11, serine 12, isoleucine 13, glycine 36, and asparagine 122. Residue lysine 123 coordinates 1-deoxy-D-xylulose 5-phosphate. NADPH is bound at residue glutamate 124. Aspartate 148 serves as a coordination point for Mn(2+). 1-deoxy-D-xylulose 5-phosphate contacts are provided by serine 149, glutamate 150, serine 174, and histidine 197. Glutamate 150 lines the Mn(2+) pocket. Glycine 203 is a binding site for NADPH. 1-deoxy-D-xylulose 5-phosphate contacts are provided by serine 210, asparagine 215, lysine 216, and glutamate 219. Glutamate 219 contacts Mn(2+).

This sequence belongs to the DXR family. Requires Mg(2+) as cofactor. Mn(2+) is required as a cofactor.

The catalysed reaction is 2-C-methyl-D-erythritol 4-phosphate + NADP(+) = 1-deoxy-D-xylulose 5-phosphate + NADPH + H(+). The protein operates within isoprenoid biosynthesis; isopentenyl diphosphate biosynthesis via DXP pathway; isopentenyl diphosphate from 1-deoxy-D-xylulose 5-phosphate: step 1/6. In terms of biological role, catalyzes the NADPH-dependent rearrangement and reduction of 1-deoxy-D-xylulose-5-phosphate (DXP) to 2-C-methyl-D-erythritol 4-phosphate (MEP). The chain is 1-deoxy-D-xylulose 5-phosphate reductoisomerase from Chlorobium phaeobacteroides (strain DSM 266 / SMG 266 / 2430).